The following is a 257-amino-acid chain: Imidazole glycerol phosphate synthase subunit HisF (257 aa).

Residues Asp-12 and Asp-131 contribute to the active site.

This sequence belongs to the HisA/HisF family. In terms of assembly, heterodimer of HisH and HisF.

It localises to the cytoplasm. It catalyses the reaction 5-[(5-phospho-1-deoxy-D-ribulos-1-ylimino)methylamino]-1-(5-phospho-beta-D-ribosyl)imidazole-4-carboxamide + L-glutamine = D-erythro-1-(imidazol-4-yl)glycerol 3-phosphate + 5-amino-1-(5-phospho-beta-D-ribosyl)imidazole-4-carboxamide + L-glutamate + H(+). It participates in amino-acid biosynthesis; L-histidine biosynthesis; L-histidine from 5-phospho-alpha-D-ribose 1-diphosphate: step 5/9. Functionally, IGPS catalyzes the conversion of PRFAR and glutamine to IGP, AICAR and glutamate. The HisF subunit catalyzes the cyclization activity that produces IGP and AICAR from PRFAR using the ammonia provided by the HisH subunit. In Nocardia farcinica (strain IFM 10152), this protein is Imidazole glycerol phosphate synthase subunit HisF.